A 235-amino-acid chain; its full sequence is tRNA pseudouridine synthase B (235 aa).

The Nucleophile role is filled by Asp-45.

Belongs to the pseudouridine synthase TruB family. Type 1 subfamily.

The enzyme catalyses uridine(55) in tRNA = pseudouridine(55) in tRNA. Functionally, responsible for synthesis of pseudouridine from uracil-55 in the psi GC loop of transfer RNAs. The polypeptide is tRNA pseudouridine synthase B (Chlamydia felis (strain Fe/C-56) (Chlamydophila felis)).